The sequence spans 509 residues: Maturase K (509 aa).

The protein belongs to the intron maturase 2 family. MatK subfamily.

The protein localises to the plastid. Its subcellular location is the chloroplast. In terms of biological role, usually encoded in the trnK tRNA gene intron. Probably assists in splicing its own and other chloroplast group II introns. The protein is Maturase K of Nicotiana plumbaginifolia (Leadwort-leaved tobacco).